Here is a 793-residue protein sequence, read N- to C-terminus: Kinesin-like protein KIF3C (793 aa).

The Kinesin motor domain occupies 10-365 (ALKVVARCRP…LRFANRAKNI (356 aa)). Position 97–104 (97–104 (GQTGTGKT)) interacts with ATP. Disordered regions lie at residues 251-288 (ERQNKAGPNTAGGASTPSSGGSGGGGGSGGGAGGERPK), 395-423 (EKRGMLGKRPRRKSSRGKKAVSAPPGYPE), and 756-793 (KVRKSRSWCQSPQRPPPSTTHASLASASLRPATVADHE). The span at 270–284 (GGSGGGGGSGGGAGG) shows a compositional bias: gly residues. Positions 376-630 (KDTLLREFQE…QNEQTRELKL (255 aa)) form a coiled coil. A compositionally biased stretch (basic residues) spans 399–413 (MLGKRPRRKSSRGKK). Positions 631-793 (KYLIIENFIP…LRPATVADHE (163 aa)) are globular.

It belongs to the TRAFAC class myosin-kinesin ATPase superfamily. Kinesin family. Kinesin II subfamily. In terms of assembly, heterodimer of KIF3A and KIF3C.

It localises to the cytoplasm. The protein localises to the cytoskeleton. Microtubule-based anterograde translocator for membranous organelles. The chain is Kinesin-like protein KIF3C (KIF3C) from Pongo abelii (Sumatran orangutan).